The primary structure comprises 100 residues: NADH-quinone oxidoreductase subunit K 2 (100 aa).

The next 3 helical transmembrane spans lie at L4–I24, I29–L49, and I60–M80.

This sequence belongs to the complex I subunit 4L family. NDH-1 is composed of 14 different subunits. Subunits NuoA, H, J, K, L, M, N constitute the membrane sector of the complex.

It is found in the cell inner membrane. The catalysed reaction is a quinone + NADH + 5 H(+)(in) = a quinol + NAD(+) + 4 H(+)(out). Its function is as follows. NDH-1 shuttles electrons from NADH, via FMN and iron-sulfur (Fe-S) centers, to quinones in the respiratory chain. The immediate electron acceptor for the enzyme in this species is believed to be ubiquinone. Couples the redox reaction to proton translocation (for every two electrons transferred, four hydrogen ions are translocated across the cytoplasmic membrane), and thus conserves the redox energy in a proton gradient. This is NADH-quinone oxidoreductase subunit K 2 from Geobacter metallireducens (strain ATCC 53774 / DSM 7210 / GS-15).